The chain runs to 515 residues: Bifunctional purine biosynthesis protein PurH (515 aa).

Residues 1–145 (MTKRALISVS…KNHASVTVVV (145 aa)) form the MGS-like domain.

The protein belongs to the PurH family.

It carries out the reaction (6R)-10-formyltetrahydrofolate + 5-amino-1-(5-phospho-beta-D-ribosyl)imidazole-4-carboxamide = 5-formamido-1-(5-phospho-D-ribosyl)imidazole-4-carboxamide + (6S)-5,6,7,8-tetrahydrofolate. The catalysed reaction is IMP + H2O = 5-formamido-1-(5-phospho-D-ribosyl)imidazole-4-carboxamide. It functions in the pathway purine metabolism; IMP biosynthesis via de novo pathway; 5-formamido-1-(5-phospho-D-ribosyl)imidazole-4-carboxamide from 5-amino-1-(5-phospho-D-ribosyl)imidazole-4-carboxamide (10-formyl THF route): step 1/1. It participates in purine metabolism; IMP biosynthesis via de novo pathway; IMP from 5-formamido-1-(5-phospho-D-ribosyl)imidazole-4-carboxamide: step 1/1. The chain is Bifunctional purine biosynthesis protein PurH from Streptococcus pyogenes serotype M6 (strain ATCC BAA-946 / MGAS10394).